Here is a 525-residue protein sequence, read N- to C-terminus: GMP synthase [glutamine-hydrolyzing] (525 aa).

Residues 8 to 207 enclose the Glutamine amidotransferase type-1 domain; that stretch reads KILILDFGSQ…ALDICGCAAN (200 aa). The Nucleophile role is filled by Cys-85. Residues His-181 and Glu-183 contribute to the active site. The GMPS ATP-PPase domain maps to 208–400; the sequence is WKPSSIIEDA…LGLPYNMLYR (193 aa). 235 to 241 is a binding site for ATP; it reads SGGVDSS.

As to quaternary structure, homodimer.

The enzyme catalyses XMP + L-glutamine + ATP + H2O = GMP + L-glutamate + AMP + diphosphate + 2 H(+). It participates in purine metabolism; GMP biosynthesis; GMP from XMP (L-Gln route): step 1/1. Functionally, catalyzes the synthesis of GMP from XMP. This is GMP synthase [glutamine-hydrolyzing] from Shewanella baltica (strain OS155 / ATCC BAA-1091).